The primary structure comprises 402 residues: Multidrug resistance protein MdtH (402 aa).

Residues 1 to 12 are Cytoplasmic-facing; it reads MSRVSQARNLGK. Residues 13 to 33 traverse the membrane as a helical segment; it reads YFLLIDNMLVVLGFFVVFPLI. The Periplasmic portion of the chain corresponds to 34 to 98; the sequence is SIRFVDQMGW…GFATMGIAHE (65 aa). A helical membrane pass occupies residues 99–116; it reads PWLLWFSCFLSGLGGTLF. Residues 117 to 138 are Cytoplasmic-facing; the sequence is DPPRSALVVKLIRPEQRGRFFS. The chain crosses the membrane as a helical span at residues 139–159; it reads LLMMQDSAGAVIGALLGSWLL. Topologically, residues 160 to 164 are periplasmic; it reads QYDFR. A helical membrane pass occupies residues 165 to 185; it reads LVCATGAILFILCALFNAWLL. At 186 to 213 the chain is on the cytoplasmic side; the sequence is PAWKLSTVRTPVREGMRRVMSDKRFVTY. The helical transmembrane segment at 214–234 threads the bilayer; the sequence is VLTLAGYYMLAVQVMLMLPIM. Residues 235–243 are Periplasmic-facing; it reads VNDIAGSPA. The chain crosses the membrane as a helical span at residues 244–264; it reads AVKWMYAIEACLSLTLLYPIA. At 265–276 the chain is on the cytoplasmic side; it reads RWSEKRFRLEHR. A helical membrane pass occupies residues 277 to 297; the sequence is LMAGLLVMSLSMIPIGMVGNL. The Periplasmic segment spans residues 298-299; that stretch reads QQ. A helical membrane pass occupies residues 300 to 320; it reads LFTLICAFYIGSVIAEPARET. The Cytoplasmic portion of the chain corresponds to 321–339; it reads LSASLADARARGSYMGFSR. The helical transmembrane segment at 340-360 threads the bilayer; it reads LGLAIGGAIGYIGGGWLFDMG. At 361-367 the chain is on the periplasmic side; that stretch reads KALTQPE. A helical transmembrane segment spans residues 368–388; it reads LPWMMLGIIGFITFLALGWQF. Residues 389 to 402 lie on the Cytoplasmic side of the membrane; the sequence is SHKRTPRRMLEPGA.

The protein belongs to the major facilitator superfamily. DHA1 family. MdtH (TC 2.A.1.2.21) subfamily.

The protein localises to the cell inner membrane. This is Multidrug resistance protein MdtH from Salmonella paratyphi B (strain ATCC BAA-1250 / SPB7).